Reading from the N-terminus, the 124-residue chain is Holo-[acyl-carrier-protein] synthase (124 aa).

The Mg(2+) site is built by Asp5 and Glu51.

It belongs to the P-Pant transferase superfamily. AcpS family. Requires Mg(2+) as cofactor.

Its subcellular location is the cytoplasm. The enzyme catalyses apo-[ACP] + CoA = holo-[ACP] + adenosine 3',5'-bisphosphate + H(+). Its function is as follows. Transfers the 4'-phosphopantetheine moiety from coenzyme A to a Ser of acyl-carrier-protein. The sequence is that of Holo-[acyl-carrier-protein] synthase from Hydrogenobaculum sp. (strain Y04AAS1).